The chain runs to 202 residues: MDKFVKLTGVAAPLPVVNVDTDMIIPKDYLKTIKRTGLGTGLFAEARYNEDGSENPDFVLNKPAYRDAKILVAGDNFGCGSSREHAPWALLDFGIRCVISTSFADIFYNNCFKNGILPIKVSQEDLDKLMDDASRGSNAILTVDLENLEITGPDGGLIKFDLDEFKRHCLLNGLDDIGLTLEKGKAIDSFEKKNAASHPWAA.

The protein belongs to the LeuD family. LeuD type 1 subfamily. As to quaternary structure, heterodimer of LeuC and LeuD.

It carries out the reaction (2R,3S)-3-isopropylmalate = (2S)-2-isopropylmalate. It functions in the pathway amino-acid biosynthesis; L-leucine biosynthesis; L-leucine from 3-methyl-2-oxobutanoate: step 2/4. Functionally, catalyzes the isomerization between 2-isopropylmalate and 3-isopropylmalate, via the formation of 2-isopropylmaleate. In Rhizobium johnstonii (strain DSM 114642 / LMG 32736 / 3841) (Rhizobium leguminosarum bv. viciae), this protein is 3-isopropylmalate dehydratase small subunit.